We begin with the raw amino-acid sequence, 90 residues long: METIVNGFNQPNAQASPLAYGLTMVAAGLAIMGAGVVSVGQGMAVAKAVEAIGRNPEATSKIRSTLIMGLAIVETASIYCFIIALLIIFV.

Transmembrane regions (helical) follow at residues 17–37 and 70–90; these read PLAY…AGVV and LAIV…IIFV.

Belongs to the ATPase C chain family. As to quaternary structure, F-type ATPases have 2 components, F(1) - the catalytic core - and F(0) - the membrane proton channel. F(1) has five subunits: alpha(3), beta(3), gamma(1), delta(1), epsilon(1). F(0) has three main subunits: a(1), b(2) and c(10-14). The alpha and beta chains form an alternating ring which encloses part of the gamma chain. F(1) is attached to F(0) by a central stalk formed by the gamma and epsilon chains, while a peripheral stalk is formed by the delta and b chains.

It is found in the cell membrane. Functionally, f(1)F(0) ATP synthase produces ATP from ADP in the presence of a proton or sodium gradient. F-type ATPases consist of two structural domains, F(1) containing the extramembraneous catalytic core and F(0) containing the membrane proton channel, linked together by a central stalk and a peripheral stalk. During catalysis, ATP synthesis in the catalytic domain of F(1) is coupled via a rotary mechanism of the central stalk subunits to proton translocation. In terms of biological role, key component of the F(0) channel; it plays a direct role in translocation across the membrane. A homomeric c-ring of between 10-14 subunits forms the central stalk rotor element with the F(1) delta and epsilon subunits. The sequence is that of ATP synthase subunit c from Metamycoplasma arthritidis (strain 158L3-1) (Mycoplasma arthritidis).